A 104-amino-acid chain; its full sequence is Large ribosomal subunit protein uL24 (104 aa).

The protein belongs to the universal ribosomal protein uL24 family. Part of the 50S ribosomal subunit.

One of two assembly initiator proteins, it binds directly to the 5'-end of the 23S rRNA, where it nucleates assembly of the 50S subunit. Functionally, one of the proteins that surrounds the polypeptide exit tunnel on the outside of the subunit. The polypeptide is Large ribosomal subunit protein uL24 (Shewanella pealeana (strain ATCC 700345 / ANG-SQ1)).